Reading from the N-terminus, the 417-residue chain is NADH-quinone oxidoreductase subunit D (417 aa).

It belongs to the complex I 49 kDa subunit family. In terms of assembly, NDH-1 is composed of 14 different subunits. Subunits NuoB, C, D, E, F, and G constitute the peripheral sector of the complex.

The protein localises to the cell inner membrane. The catalysed reaction is a quinone + NADH + 5 H(+)(in) = a quinol + NAD(+) + 4 H(+)(out). Its function is as follows. NDH-1 shuttles electrons from NADH, via FMN and iron-sulfur (Fe-S) centers, to quinones in the respiratory chain. The immediate electron acceptor for the enzyme in this species is believed to be ubiquinone. Couples the redox reaction to proton translocation (for every two electrons transferred, four hydrogen ions are translocated across the cytoplasmic membrane), and thus conserves the redox energy in a proton gradient. This Burkholderia multivorans (strain ATCC 17616 / 249) protein is NADH-quinone oxidoreductase subunit D.